Here is a 143-residue protein sequence, read N- to C-terminus: Large-conductance mechanosensitive channel (143 aa).

2 helical membrane-spanning segments follow: residues 16-36 (VIDL…VTAL) and 84-104 (INTV…VKLI).

This sequence belongs to the MscL family. In terms of assembly, homopentamer.

The protein resides in the cell inner membrane. Channel that opens in response to stretch forces in the membrane lipid bilayer. May participate in the regulation of osmotic pressure changes within the cell. This chain is Large-conductance mechanosensitive channel, found in Xanthomonas campestris pv. campestris (strain 8004).